Consider the following 822-residue polypeptide: von Willebrand factor A domain-containing protein 5A (822 aa).

In terms of domain architecture, VIT spans 1-131; that stretch reads MEHHWGLITG…KVAVTLRYVQ (131 aa). Positions 281-469 constitute a VWFA domain; it reads EFVFLMDRSG…LALQCALDDI (189 aa). Residues 657–682 are disordered; the sequence is SMPSPAPIENQGVADSSNEKSNSQNE. Positions 669 to 680 are enriched in polar residues; sequence VADSSNEKSNSQ.

May play a role in tumorigenesis as a tumor suppressor. Altered expression of this protein and disruption of the molecular pathway it is involved in may contribute directly to or modify tumorigenesis. This Rattus norvegicus (Rat) protein is von Willebrand factor A domain-containing protein 5A (Vwa5a).